The primary structure comprises 523 residues: Bifunctional purine biosynthesis protein PurH (523 aa).

The MGS-like domain occupies 1-150; the sequence is MSDVVPVRNA…KNHGDVAIAT (150 aa).

This sequence belongs to the PurH family.

It catalyses the reaction (6R)-10-formyltetrahydrofolate + 5-amino-1-(5-phospho-beta-D-ribosyl)imidazole-4-carboxamide = 5-formamido-1-(5-phospho-D-ribosyl)imidazole-4-carboxamide + (6S)-5,6,7,8-tetrahydrofolate. The catalysed reaction is IMP + H2O = 5-formamido-1-(5-phospho-D-ribosyl)imidazole-4-carboxamide. Its pathway is purine metabolism; IMP biosynthesis via de novo pathway; 5-formamido-1-(5-phospho-D-ribosyl)imidazole-4-carboxamide from 5-amino-1-(5-phospho-D-ribosyl)imidazole-4-carboxamide (10-formyl THF route): step 1/1. The protein operates within purine metabolism; IMP biosynthesis via de novo pathway; IMP from 5-formamido-1-(5-phospho-D-ribosyl)imidazole-4-carboxamide: step 1/1. The polypeptide is Bifunctional purine biosynthesis protein PurH (Rhodopirellula baltica (strain DSM 10527 / NCIMB 13988 / SH1)).